Consider the following 414-residue polypeptide: Argininosuccinate synthase (414 aa).

ATP-binding positions include 15–23 and alanine 42; that span reads AYSGGLDTS. Residues tyrosine 93 and serine 98 each coordinate L-citrulline. Glycine 123 is an ATP binding site. L-aspartate contacts are provided by threonine 125, asparagine 129, and aspartate 130. Asparagine 129 is a binding site for L-citrulline. The L-citrulline site is built by arginine 133, serine 182, serine 191, glutamate 267, and tyrosine 279.

Belongs to the argininosuccinate synthase family. Type 1 subfamily. As to quaternary structure, homotetramer.

The protein localises to the cytoplasm. It carries out the reaction L-citrulline + L-aspartate + ATP = 2-(N(omega)-L-arginino)succinate + AMP + diphosphate + H(+). It functions in the pathway amino-acid biosynthesis; L-arginine biosynthesis; L-arginine from L-ornithine and carbamoyl phosphate: step 2/3. This Deinococcus geothermalis (strain DSM 11300 / CIP 105573 / AG-3a) protein is Argininosuccinate synthase.